Reading from the N-terminus, the 393-residue chain is S-adenosylmethionine synthase 3 (393 aa).

Glu-43 provides a ligand contact to K(+). L-methionine is bound by residues Glu-56 and Gln-99. ATP contacts are provided by residues 167 to 169 (DGK), 235 to 238 (SGRF), Asp-246, 252 to 253 (RK), Ala-269, Lys-273, and Lys-277. An L-methionine-binding site is contributed by Asp-246. An L-methionine-binding site is contributed by Lys-277.

It belongs to the AdoMet synthase family. As to quaternary structure, homotetramer. Requires Mn(2+) as cofactor. Mg(2+) serves as cofactor. Co(2+) is required as a cofactor. The cofactor is K(+).

Its subcellular location is the cytoplasm. It carries out the reaction L-methionine + ATP + H2O = S-adenosyl-L-methionine + phosphate + diphosphate. It participates in amino-acid biosynthesis; S-adenosyl-L-methionine biosynthesis; S-adenosyl-L-methionine from L-methionine: step 1/1. Catalyzes the formation of S-adenosylmethionine from methionine and ATP. The reaction comprises two steps that are both catalyzed by the same enzyme: formation of S-adenosylmethionine (AdoMet) and triphosphate, and subsequent hydrolysis of the triphosphate. This chain is S-adenosylmethionine synthase 3 (SAM3), found in Actinidia chinensis var. chinensis (Chinese soft-hair kiwi).